The chain runs to 357 residues: tRNA/tmRNA (uracil-C(5))-methyltransferase (357 aa).

Residues Gln-185, Tyr-212, Asn-217, Glu-233, and Asp-291 each contribute to the S-adenosyl-L-methionine site. Cys-316 serves as the catalytic Nucleophile. The active-site Proton acceptor is the Glu-350.

This sequence belongs to the class I-like SAM-binding methyltransferase superfamily. RNA M5U methyltransferase family. TrmA subfamily.

The catalysed reaction is uridine(54) in tRNA + S-adenosyl-L-methionine = 5-methyluridine(54) in tRNA + S-adenosyl-L-homocysteine + H(+). It catalyses the reaction uridine(341) in tmRNA + S-adenosyl-L-methionine = 5-methyluridine(341) in tmRNA + S-adenosyl-L-homocysteine + H(+). Dual-specificity methyltransferase that catalyzes the formation of 5-methyluridine at position 54 (m5U54) in all tRNAs, and that of position 341 (m5U341) in tmRNA (transfer-mRNA). The polypeptide is tRNA/tmRNA (uracil-C(5))-methyltransferase (Campylobacter hominis (strain ATCC BAA-381 / DSM 21671 / CCUG 45161 / LMG 19568 / NCTC 13146 / CH001A)).